We begin with the raw amino-acid sequence, 134 residues long: Ribosome-binding factor A (134 aa).

It belongs to the RbfA family. Monomer. Binds 30S ribosomal subunits, but not 50S ribosomal subunits or 70S ribosomes.

The protein resides in the cytoplasm. One of several proteins that assist in the late maturation steps of the functional core of the 30S ribosomal subunit. Associates with free 30S ribosomal subunits (but not with 30S subunits that are part of 70S ribosomes or polysomes). Required for efficient processing of 16S rRNA. May interact with the 5'-terminal helix region of 16S rRNA. In Sinorhizobium medicae (strain WSM419) (Ensifer medicae), this protein is Ribosome-binding factor A.